A 249-amino-acid chain; its full sequence is Ribonuclease HII (249 aa).

The segment covering 1-19 (MAPRPKAPPQPAEPDPALP) has biased composition (pro residues). A disordered region spans residues 1–31 (MAPRPKAPPQPAEPDPALPRPRGRPPKAGAV). Residues 52–240 (APVAGADEVG…VREQQLGLFP (189 aa)) enclose the RNase H type-2 domain. 3 residues coordinate a divalent metal cation: Asp-58, Glu-59, and Asp-149.

Belongs to the RNase HII family. The cofactor is Mn(2+). Mg(2+) is required as a cofactor.

Its subcellular location is the cytoplasm. It carries out the reaction Endonucleolytic cleavage to 5'-phosphomonoester.. Its function is as follows. Endonuclease that specifically degrades the RNA of RNA-DNA hybrids. The protein is Ribonuclease HII of Xanthobacter autotrophicus (strain ATCC BAA-1158 / Py2).